The sequence spans 261 residues: Methionine aminopeptidase (261 aa).

His-78 serves as a coordination point for substrate. 3 residues coordinate a divalent metal cation: Asp-96, Asp-107, and His-170. Substrate is bound at residue His-177. The a divalent metal cation site is built by Glu-202 and Glu-233.

This sequence belongs to the peptidase M24A family. Methionine aminopeptidase type 1 subfamily. As to quaternary structure, monomer. Requires Co(2+) as cofactor. Zn(2+) serves as cofactor. The cofactor is Mn(2+). It depends on Fe(2+) as a cofactor.

The enzyme catalyses Release of N-terminal amino acids, preferentially methionine, from peptides and arylamides.. Its function is as follows. Removes the N-terminal methionine from nascent proteins. The N-terminal methionine is often cleaved when the second residue in the primary sequence is small and uncharged (Met-Ala-, Cys, Gly, Pro, Ser, Thr, or Val). Requires deformylation of the N(alpha)-formylated initiator methionine before it can be hydrolyzed. The polypeptide is Methionine aminopeptidase (Buchnera aphidicola subsp. Schizaphis graminum (strain Sg)).